Consider the following 1651-residue polypeptide: Putative serine/threonine-protein kinase/receptor R818 (1651 aa).

An N-terminal signal peptide occupies residues 1–19 (MKSIGIFVVALWLTHFCDG). Asn-111, Asn-135, Asn-190, Asn-236, Asn-275, Asn-276, Asn-287, Asn-452, Asn-455, Asn-477, Asn-495, Asn-540, Asn-596, and Asn-722 each carry an N-linked (GlcNAc...) asparagine; by host glycan. The chain crosses the membrane as a helical span at residues 749 to 769 (IILAIVIPVSFVICCIIIVLV). The region spanning 793–1057 (LDFMESLGSG…EIMTKLSTLI (265 aa)) is the Protein kinase 1 domain. ATP-binding positions include 799–807 (LGSGGSGEV) and Lys-820. Asp-915 acts as the Proton acceptor in catalysis. Residues 1089 to 1115 (IHNNDETKNSFGSTTYGSNTISSSSNT) form a disordered region. Low complexity predominate over residues 1100-1115 (GSTTYGSNTISSSSNT). The Guanylate cyclase domain occupies 1135–1278 (IIVFTDIISA…VTVNIAAKIT (144 aa)). The Protein kinase 2 domain occupies 1394 to 1645 (IQIGKQIGVG…DVIMGLNDML (252 aa)). ATP is bound by residues 1400-1408 (IGVGSYGIV) and Lys-1421. Asp-1515 (proton acceptor) is an active-site residue.

Its subcellular location is the membrane. It carries out the reaction L-seryl-[protein] + ATP = O-phospho-L-seryl-[protein] + ADP + H(+). The catalysed reaction is L-threonyl-[protein] + ATP = O-phospho-L-threonyl-[protein] + ADP + H(+). This Acanthamoeba polyphaga mimivirus (APMV) protein is Putative serine/threonine-protein kinase/receptor R818.